The chain runs to 351 residues: Tryptophan--tRNA ligase 2 (351 aa).

The interval 1 to 24 is disordered; the sequence is MPFVDLEVPTMTTPTPAATPARPR. The segment covering 9–24 has biased composition (low complexity); that stretch reads PTMTTPTPAATPARPR. Residues 31–39 carry the 'HIGH' region motif; it reads PTGALHLGH. The short motif at 215-219 is the 'KMSKS' region element; the sequence is KMSKS. K218 is a binding site for ATP.

Belongs to the class-I aminoacyl-tRNA synthetase family. Homodimer. Forms a complex with nos; one homodimer of trpS2 binds one homodimer of nos.

The enzyme catalyses tRNA(Trp) + L-tryptophan + ATP = L-tryptophyl-tRNA(Trp) + AMP + diphosphate + H(+). Functionally, catalyzes the formation of 5'adenyl-Trp and tRNA(Trp) but with 5-fold less activity than TrpRS. Increases the solubility of the nitric oxide synthase oxygenase (nos), as well as its affinity for substrate L-arginine and its nitric-oxide synthase activity. The complex between trpS2 and nos catalyzes the regioselective nitration of tryptophan at the 4-position. This is Tryptophan--tRNA ligase 2 (trpS2) from Deinococcus radiodurans (strain ATCC 13939 / DSM 20539 / JCM 16871 / CCUG 27074 / LMG 4051 / NBRC 15346 / NCIMB 9279 / VKM B-1422 / R1).